The primary structure comprises 191 residues: Flagellar transcriptional regulator FlhC (191 aa).

Residues Cys139, Cys142, Cys159, and Cys162 each contribute to the Zn(2+) site.

It belongs to the FlhC family. Heterohexamer composed of two FlhC and four FlhD subunits. Each FlhC binds a FlhD dimer, forming a heterotrimer, and a hexamer assembles by dimerization of two heterotrimers. It depends on Zn(2+) as a cofactor.

It is found in the cytoplasm. Its function is as follows. Functions in complex with FlhD as a master transcriptional regulator that regulates transcription of several flagellar and non-flagellar operons by binding to their promoter region. Activates expression of class 2 flagellar genes, including fliA, which is a flagellum-specific sigma factor that turns on the class 3 genes. Also regulates genes whose products function in a variety of physiological pathways. This is Flagellar transcriptional regulator FlhC from Enterobacter cloacae subsp. cloacae (strain ATCC 13047 / DSM 30054 / NBRC 13535 / NCTC 10005 / WDCM 00083 / NCDC 279-56).